The chain runs to 103 residues: Large ribosomal subunit protein bL21 (103 aa).

The protein belongs to the bacterial ribosomal protein bL21 family. As to quaternary structure, part of the 50S ribosomal subunit. Contacts protein L20.

Functionally, this protein binds to 23S rRNA in the presence of protein L20. The chain is Large ribosomal subunit protein bL21 from Vibrio parahaemolyticus serotype O3:K6 (strain RIMD 2210633).